A 184-amino-acid polypeptide reads, in one-letter code: Homeobox protein LOX10 (184 aa).

Disordered stretches follow at residues 1-29 and 129-184; these read KIVS…PLQH and YKTK…NKPG. The segment at residues 76 to 135 is a DNA-binding region (homeobox); the sequence is RRKRRILFSQAQIYELERRFRQQKYLSAPEREHLATFIGLTPTQVKIWFQNHRYKTKKSK. 2 stretches are compositionally biased toward low complexity: residues 140-161 and 174-184; these read NSPS…ASTT and SNTTNNNNKPG.

Belongs to the NK-2 homeobox family. As to expression, expressed in a segmental pattern in the endoderm and in the cephalic nervous system.

Its subcellular location is the nucleus. In terms of biological role, may play a role in patterning the gut. The chain is Homeobox protein LOX10 (LOX10) from Helobdella triserialis (Leech).